The chain runs to 278 residues: Indole-3-glycerol phosphate synthase (278 aa).

Belongs to the TrpC family.

It catalyses the reaction 1-(2-carboxyphenylamino)-1-deoxy-D-ribulose 5-phosphate + H(+) = (1S,2R)-1-C-(indol-3-yl)glycerol 3-phosphate + CO2 + H2O. It participates in amino-acid biosynthesis; L-tryptophan biosynthesis; L-tryptophan from chorismate: step 4/5. This is Indole-3-glycerol phosphate synthase from Pseudomonas fluorescens (strain Pf0-1).